Consider the following 416-residue polypeptide: S-adenosylmethionine synthase (416 aa).

Residue H16 participates in ATP binding. A Mg(2+)-binding site is contributed by D18. E44 is a binding site for K(+). E57 and Q100 together coordinate L-methionine. The flexible loop stretch occupies residues 100–110 (QSPDISQGVTA). Residues 175–177 (DGK), 251–252 (KF), D260, 266–267 (RK), A283, and K287 each bind ATP. D260 serves as a coordination point for L-methionine. K291 is a binding site for L-methionine.

Belongs to the AdoMet synthase family. As to quaternary structure, homotetramer; dimer of dimers. Mg(2+) serves as cofactor. Requires K(+) as cofactor.

It localises to the cytoplasm. The catalysed reaction is L-methionine + ATP + H2O = S-adenosyl-L-methionine + phosphate + diphosphate. Its pathway is amino-acid biosynthesis; S-adenosyl-L-methionine biosynthesis; S-adenosyl-L-methionine from L-methionine: step 1/1. Functionally, catalyzes the formation of S-adenosylmethionine (AdoMet) from methionine and ATP. The overall synthetic reaction is composed of two sequential steps, AdoMet formation and the subsequent tripolyphosphate hydrolysis which occurs prior to release of AdoMet from the enzyme. This Microcystis aeruginosa (strain NIES-843 / IAM M-2473) protein is S-adenosylmethionine synthase.